We begin with the raw amino-acid sequence, 181 residues long: Adenylyl-sulfate kinase (181 aa).

ATP is bound at residue 20–27; that stretch reads GLSGAGKS. Residue serine 94 is the Phosphoserine intermediate of the active site.

Belongs to the APS kinase family.

It carries out the reaction adenosine 5'-phosphosulfate + ATP = 3'-phosphoadenylyl sulfate + ADP + H(+). The protein operates within sulfur metabolism; hydrogen sulfide biosynthesis; sulfite from sulfate: step 2/3. Catalyzes the synthesis of activated sulfate. This Deinococcus geothermalis (strain DSM 11300 / CIP 105573 / AG-3a) protein is Adenylyl-sulfate kinase.